The chain runs to 445 residues: Phosphoglucosamine mutase (445 aa).

The active-site Phosphoserine intermediate is the Ser102. Positions 102, 241, 243, and 245 each coordinate Mg(2+). A Phosphoserine modification is found at Ser102.

It belongs to the phosphohexose mutase family. Requires Mg(2+) as cofactor. Activated by phosphorylation.

It carries out the reaction alpha-D-glucosamine 1-phosphate = D-glucosamine 6-phosphate. Its function is as follows. Catalyzes the conversion of glucosamine-6-phosphate to glucosamine-1-phosphate. This Acinetobacter baumannii (strain SDF) protein is Phosphoglucosamine mutase.